Reading from the N-terminus, the 342-residue chain is Flagellar P-ring protein (342 aa).

The first 19 residues, 1 to 19, serve as a signal peptide directing secretion; that stretch reads MKRVFLWLIFVLAFHKLLA.

Belongs to the FlgI family. In terms of assembly, the basal body constitutes a major portion of the flagellar organelle and consists of four rings (L,P,S, and M) mounted on a central rod.

Its subcellular location is the periplasm. It is found in the bacterial flagellum basal body. In terms of biological role, assembles around the rod to form the L-ring and probably protects the motor/basal body from shearing forces during rotation. In Helicobacter pylori (strain P12), this protein is Flagellar P-ring protein.